The sequence spans 54 residues: U7-myrmicitoxin-Tb1a (54 aa).

The N-terminal stretch at 1 to 26 is a signal peptide; sequence MQLSHLLLAFAMIFVMTIIHTPQVQA. A propeptide spanning residues 27–36 is cleaved from the precursor; that stretch reads DAMADADADA. C40 and C49 are joined by a disulfide.

As to expression, expressed by the venom gland.

The protein localises to the secreted. In terms of biological role, venom protein with unknown function. Does not induce paralysis when a high dose is administered by intrathoracic injection into the blowfly Lucilia caesar. The chain is U7-myrmicitoxin-Tb1a from Tetramorium bicarinatum (Tramp ant).